A 371-amino-acid polypeptide reads, in one-letter code: uncharacterized protein (371 aa).

The EH domain maps to 43-148 (DESRVPKFYL…VQAFPTASNP (106 aa)). The disordered stretch occupies residues 179–205 (SMRKKKESDSKEVSAHNSPAKGAAHDL).

This is an uncharacterized protein from Caenorhabditis elegans.